Consider the following 1435-residue polypeptide: Putative ATP-dependent RNA helicase YLR419W (1435 aa).

Disordered stretches follow at residues 1 to 57 (MAKK…STAS) and 226 to 251 (LSSHGGISSSGKDRQERKVASHKNSH). Phosphoserine is present on serine 9. Residues 31–43 (KGQEPEPEDDKRA) are compositionally biased toward basic and acidic residues. Polar residues predominate over residues 45–57 (QQSNRAKVTSTAS). Residues 365-406 (PLSTRMIVERLTEIGVSSDEALLALQQNDMNENEAAGFLTRE) enclose the UBA domain. The region spanning 430–531 (QELESLESIY…EWLKENISKI (102 aa)) is the RWD domain. Residues 543–566 (DSKGAINKRNISNGKRSINNSSSR) form a disordered region. Residues 551 to 566 (RNISNGKRSINNSSSR) show a composition bias toward polar residues. Positions 614–782 (IDIINKNEVV…FPGLATCHIE (169 aa)) constitute a Helicase ATP-binding domain. 627–634 (GETGSGKS) contacts ATP. The DEAH box motif lies at 729-732 (DEVH). Serine 816 bears the Phosphoserine mark. The region spanning 845–1020 (LLCQVVEYVH…SLYLSVKAMG (176 aa)) is the Helicase C-terminal domain.

Belongs to the DEAD box helicase family. DEAH subfamily.

It localises to the cytoplasm. It catalyses the reaction ATP + H2O = ADP + phosphate + H(+). In terms of biological role, probable ATP-binding RNA helicase. The sequence is that of Putative ATP-dependent RNA helicase YLR419W from Saccharomyces cerevisiae (strain ATCC 204508 / S288c) (Baker's yeast).